A 453-amino-acid polypeptide reads, in one-letter code: UDP-N-acetylmuramoylalanine--D-glutamate ligase (453 aa).

117–123 (GSNGKST) provides a ligand contact to ATP.

It belongs to the MurCDEF family.

It is found in the cytoplasm. The catalysed reaction is UDP-N-acetyl-alpha-D-muramoyl-L-alanine + D-glutamate + ATP = UDP-N-acetyl-alpha-D-muramoyl-L-alanyl-D-glutamate + ADP + phosphate + H(+). The protein operates within cell wall biogenesis; peptidoglycan biosynthesis. Cell wall formation. Catalyzes the addition of glutamate to the nucleotide precursor UDP-N-acetylmuramoyl-L-alanine (UMA). The chain is UDP-N-acetylmuramoylalanine--D-glutamate ligase from Chromobacterium violaceum (strain ATCC 12472 / DSM 30191 / JCM 1249 / CCUG 213 / NBRC 12614 / NCIMB 9131 / NCTC 9757 / MK).